Consider the following 792-residue polypeptide: Endonuclease MutS2 (792 aa).

Glycine 335–threonine 342 serves as a coordination point for ATP. Residues valine 717–lysine 792 enclose the Smr domain.

It belongs to the DNA mismatch repair MutS family. MutS2 subfamily. Homodimer. Binds to stalled ribosomes, contacting rRNA.

Functionally, endonuclease that is involved in the suppression of homologous recombination and thus may have a key role in the control of bacterial genetic diversity. Acts as a ribosome collision sensor, splitting the ribosome into its 2 subunits. Detects stalled/collided 70S ribosomes which it binds and splits by an ATP-hydrolysis driven conformational change. Acts upstream of the ribosome quality control system (RQC), a ribosome-associated complex that mediates the extraction of incompletely synthesized nascent chains from stalled ribosomes and their subsequent degradation. Probably generates substrates for RQC. This Clostridioides difficile (strain 630) (Peptoclostridium difficile) protein is Endonuclease MutS2.